Here is a 369-residue protein sequence, read N- to C-terminus: Phosphatidylglycerol--prolipoprotein diacylglyceryl transferase (369 aa).

3 consecutive transmembrane segments (helical) span residues 26-46, 60-80, and 97-117; these read YYGI…ILTL, YVFI…FIIG, and LAIQ…FFFI. Arginine 167 provides a ligand contact to a 1,2-diacyl-sn-glycero-3-phospho-(1'-sn-glycerol). The next 2 membrane-spanning stretches (helical) occupy residues 216–236 and 273–293; these read VPIF…IVFL and FVTS…GFIF.

This sequence belongs to the Lgt family.

It localises to the cell membrane. It catalyses the reaction L-cysteinyl-[prolipoprotein] + a 1,2-diacyl-sn-glycero-3-phospho-(1'-sn-glycerol) = an S-1,2-diacyl-sn-glyceryl-L-cysteinyl-[prolipoprotein] + sn-glycerol 1-phosphate + H(+). It participates in protein modification; lipoprotein biosynthesis (diacylglyceryl transfer). Its function is as follows. Catalyzes the transfer of the diacylglyceryl group from phosphatidylglycerol to the sulfhydryl group of the N-terminal cysteine of a prolipoprotein, the first step in the formation of mature lipoproteins. This Mycoplasmoides gallisepticum (strain R(low / passage 15 / clone 2)) (Mycoplasma gallisepticum) protein is Phosphatidylglycerol--prolipoprotein diacylglyceryl transferase.